Here is a 93-residue protein sequence, read N- to C-terminus: MSSQQETNDKSNTQGHPETDPEGKTGTDTGNTEDSPPDTDNVPITDDAIMDDVMDEDVKEEDIDYSWIEDMRDEDVDAEWLFELIDECNGWPD.

A compositionally biased stretch (polar residues) spans 1 to 16 (MSSQQETNDKSNTQGH). The disordered stretch occupies residues 1-52 (MSSQQETNDKSNTQGHPETDPEGKTGTDTGNTEDSPPDTDNVPITDDAIMDD).

Its subcellular location is the virion. This chain is Protein 6 (6), found in Rice yellow stunt virus (RYSV).